The primary structure comprises 623 residues: mRNA-capping enzyme (623 aa).

Residues 13 to 224 (MGLPDRWLHC…IDNGRPSTSQ (212 aa)) form a TPase region. One can recognise a Tyrosine-protein phosphatase domain in the interval 44-196 (YDNQIAERRY…YDPTEDDKIL (153 aa)). Residue C136 is the Phosphocysteine intermediate of the active site. The span at 213–229 (TQIDNGRPSTSQQIPAT) shows a compositional bias: polar residues. A disordered region spans residues 213–243 (TQIDNGRPSTSQQIPATNGNNNQNGNQLSGG). Residues 230 to 239 (NGNNNQNGNQ) are compositionally biased toward low complexity. The segment at 241-585 (SGGGDNSKLF…NPVTETYLIE (345 aa)) is GTase. K311 functions as the N6-GMP-lysine intermediate in the catalytic mechanism. GTP-binding positions include R316, R331, 357 to 359 (DTE), 477 to 479 (KWK), and 553 to 558 (RERTDK). The tract at residues 603–623 (HHQIHQQQLHEGEPEARRQKL) is disordered. Residues 610 to 623 (QLHEGEPEARRQKL) show a composition bias toward basic and acidic residues.

It in the N-terminal section; belongs to the non-receptor class of the protein-tyrosine phosphatase family. This sequence in the C-terminal section; belongs to the eukaryotic GTase family.

The protein resides in the nucleus. The enzyme catalyses a 5'-end triphospho-ribonucleoside in mRNA + H2O = a 5'-end diphospho-ribonucleoside in mRNA + phosphate + H(+). The catalysed reaction is a 5'-end diphospho-ribonucleoside in mRNA + GTP + H(+) = a 5'-end (5'-triphosphoguanosine)-ribonucleoside in mRNA + diphosphate. Its activity is regulated as follows. RNA triphosphatase activity is inhibited by magnesium. Bifunctional mRNA-capping enzyme exhibiting RNA 5'-triphosphate monophosphatase activity in the N-terminal part and mRNA guanylyltransferase activity in the C-terminal part. Catalyzes the first two steps of cap formation: by removing the gamma-phosphate from the 5'-triphosphate end of nascent mRNA to yield a diphosphate end, and by transferring the GMP moiety of GTP to the 5'-diphosphate terminus via a covalent enzyme-GMP reaction intermediate. This chain is mRNA-capping enzyme (cel-1), found in Caenorhabditis elegans.